Consider the following 296-residue polypeptide: 4-diphosphocytidyl-2-C-methyl-D-erythritol kinase (296 aa).

K19 is a catalytic residue. 102–112 (PMGAGLGGGSS) serves as a coordination point for ATP. D144 is an active-site residue.

The protein belongs to the GHMP kinase family. IspE subfamily.

It carries out the reaction 4-CDP-2-C-methyl-D-erythritol + ATP = 4-CDP-2-C-methyl-D-erythritol 2-phosphate + ADP + H(+). It functions in the pathway isoprenoid biosynthesis; isopentenyl diphosphate biosynthesis via DXP pathway; isopentenyl diphosphate from 1-deoxy-D-xylulose 5-phosphate: step 3/6. Functionally, catalyzes the phosphorylation of the position 2 hydroxy group of 4-diphosphocytidyl-2C-methyl-D-erythritol. This Burkholderia pseudomallei (strain 1710b) protein is 4-diphosphocytidyl-2-C-methyl-D-erythritol kinase.